The primary structure comprises 414 residues: 5-aminolevulinate synthase (414 aa).

Substrate is bound by residues Arg22, Ser133, and Lys152. Residues Ser185, His213, and Thr241 each coordinate pyridoxal 5'-phosphate. Residue Lys244 is part of the active site. Position 244 is an N6-(pyridoxal phosphate)lysine (Lys244). The pyridoxal 5'-phosphate site is built by Thr273 and Thr274. Thr359 contributes to the substrate binding site.

The protein belongs to the class-II pyridoxal-phosphate-dependent aminotransferase family. Homodimer. Requires pyridoxal 5'-phosphate as cofactor.

It catalyses the reaction succinyl-CoA + glycine + H(+) = 5-aminolevulinate + CO2 + CoA. It functions in the pathway porphyrin-containing compound metabolism; protoporphyrin-IX biosynthesis; 5-aminolevulinate from glycine: step 1/1. This Rickettsia typhi (strain ATCC VR-144 / Wilmington) protein is 5-aminolevulinate synthase (hemA).